The chain runs to 40 residues: Photosystem II reaction center protein Psb30 (40 aa).

A helical transmembrane segment spans residues 12–32 (VIFQLTSVALIIIAGPAVIFV).

Belongs to the Psb30/Ycf12 family. In terms of assembly, PSII is composed of 1 copy each of membrane proteins PsbA, PsbB, PsbC, PsbD, PsbE, PsbF, PsbH, PsbI, PsbJ, PsbK, PsbL, PsbM, PsbT, PsbX, PsbY, PsbZ, Psb30/Ycf12, peripheral proteins PsbO, CyanoQ (PsbQ), PsbU, PsbV and a large number of cofactors. It forms dimeric complexes.

It is found in the cellular thylakoid membrane. A core subunit of photosystem II (PSII), probably helps stabilize the reaction center. The protein is Photosystem II reaction center protein Psb30 of Nostoc sp. (strain PCC 7120 / SAG 25.82 / UTEX 2576).